A 494-amino-acid polypeptide reads, in one-letter code: MQKKYVVALDQGTTSSRAIVFDHDANIVSVSQREFTQLYPNPGWVEHDPMEIWASQSSVLIESLARAGIHSDEVAAIGITNQRETTIIWEKATGKPVYNAIVWQCRRSSEICEQLKAQGLEDYVRENTGLLLDPYFSGTKIKWILDNVPDARAKAKRGELLFGTVDTWLLWKLTEGKVHVTDPTNAARTLLFNIHSLSWDTTLLEALDIPAAMLPEVRPSCSVYGTTRIAGEGSEIPLAGIAGDQQAALFGQLCVEPGMAKNTYGTGCFLLMNTGNKAVRSSHGLLTTVAVGAQGEVNYALEGSVFMGGATIQWLRDELGLIRDASDTEYFASKVADTNGVYLVPAFVGLGAPYWDPNARGALFGLTRGANRNHIIRAALESIAYQSKDLLDAMIKDSGERLKSLKVDGGAVANDFLMQFQADITDVEVLRPSVCETTALGAAFLAGLAVGFWTSVTELEYKACIDKHFKPNIDASQRERLYVDWQDAVARTRS.

Thr13 provides a ligand contact to ADP. Residues Thr13, Thr14, and Ser15 each contribute to the ATP site. Position 13 (Thr13) interacts with sn-glycerol 3-phosphate. Arg17 is an ADP binding site. Sn-glycerol 3-phosphate is bound by residues Arg83, Glu84, Tyr135, and Asp244. Residues Arg83, Glu84, Tyr135, Asp244, and Gln245 each contribute to the glycerol site. ADP contacts are provided by Thr266 and Gly309. The ATP site is built by Thr266, Gly309, Gln313, and Gly410. ADP contacts are provided by Gly410 and Asn414.

The protein belongs to the FGGY kinase family.

The catalysed reaction is glycerol + ATP = sn-glycerol 3-phosphate + ADP + H(+). Its pathway is polyol metabolism; glycerol degradation via glycerol kinase pathway; sn-glycerol 3-phosphate from glycerol: step 1/1. Its activity is regulated as follows. Inhibited by fructose 1,6-bisphosphate (FBP). In terms of biological role, key enzyme in the regulation of glycerol uptake and metabolism. Catalyzes the phosphorylation of glycerol to yield sn-glycerol 3-phosphate. In Shewanella sp. (strain MR-7), this protein is Glycerol kinase.